The sequence spans 432 residues: uncharacterized protein (432 aa).

SIS domains follow at residues 105–244 and 277–422; these read WLTE…DLVS and CDKK…VDLP.

This is an uncharacterized protein from Saccharomyces cerevisiae (strain ATCC 204508 / S288c) (Baker's yeast).